The following is a 504-amino-acid chain: MEEYQVYLKLHRSRHQDLLYPLFFRESIYRLAYGHGSFFVENVGYNKKWSLLIVKRLITRMYQQIDLIIFANDSNKNPFGDSNKNFYSLIILEGFVVVVEIRFSLQFWISSLKELEIVKSYNTLRSISSIFPFFEDKLIYLNHESDIRIPYPIHLEILVQILRYWIKDVFFFHFLRLFFYYYFNSTSVFTPKKDISISFSKSNPRFFLFLYNLYVWEYESIFLFLRNKSSQLRFKYFRVFFERIFFYEKIEHLLEISAKDCLYTLSFFKDPFIHYVRYQGKSIFVSKNTPLLIKKWKYYFIYLWQCHFDIWSRSETIYLNQLSQHSFNFLGYFLSIRLNVSVVRSQMLQNSFLIQIFIKKLDTIVRILPLIRLLAKEKFCNILGHPISKPVWVNLSDFDIIDRFLQICRNFSHYYNGSEKKKSLYQIKYILRLSCIKTLARKHKSTVRTFLKRLGSEKLLEEFFTEEDIFSLIFPRTSFTLQRLYRDRIWYLDILFRNDLVNHS.

It belongs to the intron maturase 2 family. MatK subfamily.

It localises to the plastid. The protein localises to the chloroplast. In terms of biological role, usually encoded in the trnK tRNA gene intron. Probably assists in splicing its own and other chloroplast group II introns. This is Maturase K from Erythrina crista-galli (Cockspur coral tree).